A 419-amino-acid chain; its full sequence is Tyrosine--tRNA ligase (419 aa).

Y42 lines the L-tyrosine pocket. The 'HIGH' region motif lies at 47 to 56 (ATAPSLHVGS). Residues Y179 and Q183 each contribute to the L-tyrosine site. Residues 239 to 243 (KMGKT) carry the 'KMSKS' region motif. K242 serves as a coordination point for ATP. An S4 RNA-binding domain is found at 353-418 (IVLANLFADA…GKKKIVLVKP (66 aa)).

The protein belongs to the class-I aminoacyl-tRNA synthetase family. TyrS type 1 subfamily. As to quaternary structure, homodimer.

The protein localises to the cytoplasm. The catalysed reaction is tRNA(Tyr) + L-tyrosine + ATP = L-tyrosyl-tRNA(Tyr) + AMP + diphosphate + H(+). Catalyzes the attachment of tyrosine to tRNA(Tyr) in a two-step reaction: tyrosine is first activated by ATP to form Tyr-AMP and then transferred to the acceptor end of tRNA(Tyr). In Caulobacter sp. (strain K31), this protein is Tyrosine--tRNA ligase.